The following is a 193-amino-acid chain: Transcriptional repressor NrdR (193 aa).

Residues 3-34 (CPYCGGLDTQVKDSRPSEDASAIRRRRICPDC) fold into a zinc finger. One can recognise an ATP-cone domain in the interval 49–139 (LTVVKRSGRK…VYKNFREAKD (91 aa)). The disordered stretch occupies residues 150–193 (DQQDGAVPQAEADRPIGAGPPSEAAQPAAGEGGDAPMRRARSRA).

It belongs to the NrdR family. Requires Zn(2+) as cofactor.

Its function is as follows. Negatively regulates transcription of bacterial ribonucleotide reductase nrd genes and operons by binding to NrdR-boxes. This is Transcriptional repressor NrdR from Methylobacterium nodulans (strain LMG 21967 / CNCM I-2342 / ORS 2060).